Here is a 207-residue protein sequence, read N- to C-terminus: Thiamine-phosphate synthase (207 aa).

Residues 36–40 (QLRMK) and Asn-68 contribute to the 4-amino-2-methyl-5-(diphosphooxymethyl)pyrimidine site. The Mg(2+) site is built by Asp-69 and Asp-88. A 4-amino-2-methyl-5-(diphosphooxymethyl)pyrimidine-binding site is contributed by Ser-106. Position 132-134 (132-134 (TNT)) interacts with 2-[(2R,5Z)-2-carboxy-4-methylthiazol-5(2H)-ylidene]ethyl phosphate. Lys-135 is a 4-amino-2-methyl-5-(diphosphooxymethyl)pyrimidine binding site. 2-[(2R,5Z)-2-carboxy-4-methylthiazol-5(2H)-ylidene]ethyl phosphate is bound by residues Gly-162 and 182-183 (VS).

It belongs to the thiamine-phosphate synthase family. It depends on Mg(2+) as a cofactor.

It carries out the reaction 2-[(2R,5Z)-2-carboxy-4-methylthiazol-5(2H)-ylidene]ethyl phosphate + 4-amino-2-methyl-5-(diphosphooxymethyl)pyrimidine + 2 H(+) = thiamine phosphate + CO2 + diphosphate. The catalysed reaction is 2-(2-carboxy-4-methylthiazol-5-yl)ethyl phosphate + 4-amino-2-methyl-5-(diphosphooxymethyl)pyrimidine + 2 H(+) = thiamine phosphate + CO2 + diphosphate. It catalyses the reaction 4-methyl-5-(2-phosphooxyethyl)-thiazole + 4-amino-2-methyl-5-(diphosphooxymethyl)pyrimidine + H(+) = thiamine phosphate + diphosphate. It functions in the pathway cofactor biosynthesis; thiamine diphosphate biosynthesis; thiamine phosphate from 4-amino-2-methyl-5-diphosphomethylpyrimidine and 4-methyl-5-(2-phosphoethyl)-thiazole: step 1/1. Its function is as follows. Condenses 4-methyl-5-(beta-hydroxyethyl)thiazole monophosphate (THZ-P) and 2-methyl-4-amino-5-hydroxymethyl pyrimidine pyrophosphate (HMP-PP) to form thiamine monophosphate (TMP). The chain is Thiamine-phosphate synthase from Methanococcus maripaludis (strain C6 / ATCC BAA-1332).